We begin with the raw amino-acid sequence, 488 residues long: Malonate-semialdehyde dehydrogenase (488 aa).

Ala-150, Phe-152, Lys-176, Glu-179, Arg-180, Ser-229, and Thr-251 together coordinate NAD(+). The active-site Nucleophile is the Cys-284. Glu-382 contacts NAD(+).

Belongs to the aldehyde dehydrogenase family. IolA subfamily. As to quaternary structure, homotetramer.

It catalyses the reaction 3-oxopropanoate + NAD(+) + CoA + H2O = hydrogencarbonate + acetyl-CoA + NADH + H(+). The enzyme catalyses 2-methyl-3-oxopropanoate + NAD(+) + CoA + H2O = propanoyl-CoA + hydrogencarbonate + NADH + H(+). It participates in polyol metabolism; myo-inositol degradation into acetyl-CoA; acetyl-CoA from myo-inositol: step 7/7. In terms of biological role, catalyzes the oxidation of malonate semialdehyde (MSA) and methylmalonate semialdehyde (MMSA) into acetyl-CoA and propanoyl-CoA, respectively. Is involved in a myo-inositol catabolic pathway. Bicarbonate, and not CO2, is the end-product of the enzymatic reaction. This Listeria monocytogenes serotype 4a (strain HCC23) protein is Malonate-semialdehyde dehydrogenase.